Here is a 772-residue protein sequence, read N- to C-terminus: Acyl-homoserine lactone acylase PvdQ (772 aa).

The signal sequence occupies residues 1 to 28 (MPVFPFCRPMTCAGLAAALVAFSVGVQA). Positions 199-220 (AQSSAGFASALARQERFAAERG) are cleaved as a propeptide — spacer peptide. Catalysis depends on S221, which acts as the Nucleophile.

The protein belongs to the peptidase S45 family. As to quaternary structure, heterodimer of an alpha subunit and a beta subunit processed from the same precursor.

The protein resides in the periplasm. It catalyses the reaction an N-acyl-L-homoserine lactone + H2O = L-homoserine lactone + a carboxylate. In terms of biological role, catalyzes the deacylation of acyl-homoserine lactone (AHL or acyl-HSL), releasing homoserine lactone (HSL) and the corresponding fatty acid. Possesses a specificity for the degradation of long-chain acyl-HSLs (side chains of 11 to 14 carbons in length). The protein is Acyl-homoserine lactone acylase PvdQ (pvdQ) of Pseudomonas putida (strain ATCC 47054 / DSM 6125 / CFBP 8728 / NCIMB 11950 / KT2440).